Here is a 238-residue protein sequence, read N- to C-terminus: Ribonuclease-like storage protein (238 aa).

The N-terminal stretch at 1-23 is a signal peptide; sequence MRAIYIISVIIVSLSIFSWGGNA. Gln37 is a binding site for RNA. A disulfide bridge connects residues Cys43 and Cys49. Residues His61, Phe109, 112–113, and 116–117 each bind RNA; these read HE and KH. Catalysis depends on His61, which acts as the Proton donor. Intrachain disulfides connect Cys76-Cys120 and Cys196-Cys207. Glu113 is a catalytic residue. His117 functions as the Proton acceptor in the catalytic mechanism.

The protein belongs to the RNase T2 family. In terms of assembly, homodimer. As to expression, root.

Its function is as follows. May act as a storage protein providing a nitrogen source. Seems to have no RNase activity although it has conserved the active site residues. This Panax ginseng (Korean ginseng) protein is Ribonuclease-like storage protein.